We begin with the raw amino-acid sequence, 511 residues long: Apolipoprotein N-acyltransferase (511 aa).

6 helical membrane-spanning segments follow: residues 7 to 29, 58 to 78, 90 to 110, 125 to 145, 163 to 183, and 192 to 212; these read PGWPGHLLALAAGALTPLALAPF, GWWYGFGAFGAGTSWIYVSIH, LLMLGFTAGVAFFFALPAWLW, LAFAALWLALELFRSWFLTGF, VPVGGVWLSSFVIALSAALLV, and GASLLLGLVLLLGPWAAGLYL. The CN hydrolase domain occupies 230-470; that stretch reads IQGNIAQELK…QGILRGEVIP (241 aa). Residue E269 is the Proton acceptor of the active site. Residue K330 is part of the active site. C382 (nucleophile) is an active-site residue. Residues 482 to 502 traverse the membrane as a helical segment; the sequence is VWPLAGLAGVLLLWALLGRQL.

The protein belongs to the CN hydrolase family. Apolipoprotein N-acyltransferase subfamily.

The protein localises to the cell inner membrane. The enzyme catalyses N-terminal S-1,2-diacyl-sn-glyceryl-L-cysteinyl-[lipoprotein] + a glycerophospholipid = N-acyl-S-1,2-diacyl-sn-glyceryl-L-cysteinyl-[lipoprotein] + a 2-acyl-sn-glycero-3-phospholipid + H(+). Its pathway is protein modification; lipoprotein biosynthesis (N-acyl transfer). Its function is as follows. Catalyzes the phospholipid dependent N-acylation of the N-terminal cysteine of apolipoprotein, the last step in lipoprotein maturation. This chain is Apolipoprotein N-acyltransferase, found in Pseudomonas aeruginosa (strain LESB58).